The sequence spans 233 residues: Probable O-methyltransferase Rv1703c (233 aa).

S-adenosyl-L-methionine is bound by residues Val-55, Glu-77, Gly-79–Thr-80, and Glu-102. Asp-157 lines the a divalent metal cation pocket. Position 159 (Asp-159) interacts with S-adenosyl-L-methionine. A divalent metal cation-binding residues include Asp-185 and Asn-186.

This sequence belongs to the class I-like SAM-binding methyltransferase superfamily. Cation-dependent O-methyltransferase family.

Its function is as follows. Specifically methylates an O atom of its substrate. The polypeptide is Probable O-methyltransferase Rv1703c (Mycobacterium tuberculosis (strain ATCC 25618 / H37Rv)).